Reading from the N-terminus, the 343-residue chain is Methionine import ATP-binding protein MetN (343 aa).

The region spanning 2 to 241 (ITLSHITKQF…PKTPLAQAFI (240 aa)) is the ABC transporter domain. Residue 38–45 (GASGAGKS) participates in ATP binding.

The protein belongs to the ABC transporter superfamily. Methionine importer (TC 3.A.1.24) family. The complex is composed of two ATP-binding proteins (MetN), two transmembrane proteins (MetI) and a solute-binding protein (MetQ).

The protein resides in the cell inner membrane. The catalysed reaction is L-methionine(out) + ATP + H2O = L-methionine(in) + ADP + phosphate + H(+). It catalyses the reaction D-methionine(out) + ATP + H2O = D-methionine(in) + ADP + phosphate + H(+). Functionally, part of the ABC transporter complex MetNIQ involved in methionine import. Responsible for energy coupling to the transport system. The chain is Methionine import ATP-binding protein MetN from Sodalis glossinidius (strain morsitans).